We begin with the raw amino-acid sequence, 201 residues long: Guanylate kinase (201 aa).

One can recognise a Guanylate kinase-like domain in the interval 7-186; the sequence is GVLLVLSSPS…SVEEISSILN (180 aa). 14 to 21 provides a ligand contact to ATP; the sequence is SPSGAGKT.

Belongs to the guanylate kinase family.

It localises to the cytoplasm. It catalyses the reaction GMP + ATP = GDP + ADP. Its function is as follows. Essential for recycling GMP and indirectly, cGMP. The chain is Guanylate kinase from Wolbachia pipientis wMel.